Reading from the N-terminus, the 291-residue chain is Glycine--tRNA ligase alpha subunit (291 aa).

The protein belongs to the class-II aminoacyl-tRNA synthetase family. As to quaternary structure, tetramer of two alpha and two beta subunits.

The protein localises to the cytoplasm. The catalysed reaction is tRNA(Gly) + glycine + ATP = glycyl-tRNA(Gly) + AMP + diphosphate. The sequence is that of Glycine--tRNA ligase alpha subunit from Geotalea uraniireducens (strain Rf4) (Geobacter uraniireducens).